The chain runs to 183 residues: Putative lipoprotein LpqE (183 aa).

Positions 1–30 are cleaved as a signal peptide; the sequence is MSRFKISLPALATRVAVLGFLTLMASVLGG. The N-palmitoyl cysteine moiety is linked to residue C31. The S-diacylglycerol cysteine moiety is linked to residue C31.

It localises to the cell membrane. In Mycobacterium leprae (strain TN), this protein is Putative lipoprotein LpqE (lpqE).